The sequence spans 216 residues: Ribosomal RNA large subunit methyltransferase E (216 aa).

Residues glycine 60, tryptophan 62, aspartate 80, aspartate 96, and aspartate 121 each contribute to the S-adenosyl-L-methionine site. Lysine 161 acts as the Proton acceptor in catalysis.

This sequence belongs to the class I-like SAM-binding methyltransferase superfamily. RNA methyltransferase RlmE family.

Its subcellular location is the cytoplasm. The catalysed reaction is uridine(2552) in 23S rRNA + S-adenosyl-L-methionine = 2'-O-methyluridine(2552) in 23S rRNA + S-adenosyl-L-homocysteine + H(+). Functionally, specifically methylates the uridine in position 2552 of 23S rRNA at the 2'-O position of the ribose in the fully assembled 50S ribosomal subunit. This is Ribosomal RNA large subunit methyltransferase E from Pseudomonas savastanoi pv. phaseolicola (strain 1448A / Race 6) (Pseudomonas syringae pv. phaseolicola (strain 1448A / Race 6)).